The chain runs to 531 residues: Pyruvate kinase (531 aa).

Arginine 86 contributes to the substrate binding site. Residues asparagine 88, serine 90, aspartate 121, and threonine 122 each contribute to the K(+) site. 88–91 (NFSH) provides a ligand contact to ATP. Arginine 128 and lysine 211 together coordinate ATP. A Mg(2+)-binding site is contributed by glutamate 277. Residues glycine 300, aspartate 301, and threonine 333 each contribute to the substrate site. Aspartate 301 contributes to the Mg(2+) binding site.

This sequence belongs to the pyruvate kinase family. Homotetramer. Mg(2+) serves as cofactor. The cofactor is K(+).

It catalyses the reaction pyruvate + ATP = phosphoenolpyruvate + ADP + H(+). It functions in the pathway carbohydrate degradation; glycolysis; pyruvate from D-glyceraldehyde 3-phosphate: step 5/5. This is Pyruvate kinase (PYK) from Eimeria tenella (Coccidian parasite).